Reading from the N-terminus, the 350-residue chain is Dihydroorotase (350 aa).

The Zn(2+) site is built by His17 and His19. Residues His19 to Arg21 and Asn45 each bind substrate. Zn(2+) is bound by residues Lys103, His140, and His178. Lys103 is subject to N6-carboxylysine. Substrate is bound at residue His140. Leu223 contributes to the substrate binding site. Asp251 serves as a coordination point for Zn(2+). Residue Asp251 is part of the active site. Substrate is bound by residues His255 and Ala267.

The protein belongs to the metallo-dependent hydrolases superfamily. DHOase family. Class II DHOase subfamily. In terms of assembly, homodimer. The cofactor is Zn(2+).

The enzyme catalyses (S)-dihydroorotate + H2O = N-carbamoyl-L-aspartate + H(+). The protein operates within pyrimidine metabolism; UMP biosynthesis via de novo pathway; (S)-dihydroorotate from bicarbonate: step 3/3. In terms of biological role, catalyzes the reversible cyclization of carbamoyl aspartate to dihydroorotate. The chain is Dihydroorotase from Erwinia tasmaniensis (strain DSM 17950 / CFBP 7177 / CIP 109463 / NCPPB 4357 / Et1/99).